A 388-amino-acid chain; its full sequence is Fructose-bisphosphate aldolase, chloroplastic (388 aa).

The N-terminal 38 residues, M1–A38, are a transit peptide targeting the chloroplast. Substrate is bound at residue R72. Catalysis depends on E215, which acts as the Proton acceptor. Catalysis depends on K257, which acts as the Schiff-base intermediate with dihydroxyacetone-P. Substrate contacts are provided by residues S299–G301 and R329.

The protein belongs to the class I fructose-bisphosphate aldolase family. As to quaternary structure, homotetramer. As to expression, expressed in leaf mesophyll cells.

The protein resides in the plastid. It is found in the chloroplast. It localises to the plastoglobule. It carries out the reaction beta-D-fructose 1,6-bisphosphate = D-glyceraldehyde 3-phosphate + dihydroxyacetone phosphate. It functions in the pathway carbohydrate degradation; glycolysis; D-glyceraldehyde 3-phosphate and glycerone phosphate from D-glucose: step 4/4. Functionally, plays a key role in glycolysis and gluconeogenesis. This is Fructose-bisphosphate aldolase, chloroplastic from Oryza sativa subsp. japonica (Rice).